Here is a 344-residue protein sequence, read N- to C-terminus: DNA-directed RNA polymerase subunit alpha (344 aa).

The segment at 1–232 (MGQYTINLRE…HLFLPPFGLE (232 aa)) is alpha N-terminal domain (alpha-NTD). The tract at residues 270 to 344 (LIKDQFLEYS…KRFGINLKLK (75 aa)) is alpha C-terminal domain (alpha-CTD).

This sequence belongs to the RNA polymerase alpha chain family. In plastids the minimal PEP RNA polymerase catalytic core is composed of four subunits: alpha, beta, beta', and beta''. When a (nuclear-encoded) sigma factor is associated with the core the holoenzyme is formed, which can initiate transcription.

It localises to the plastid. The protein resides in the chloroplast. The catalysed reaction is RNA(n) + a ribonucleoside 5'-triphosphate = RNA(n+1) + diphosphate. Functionally, DNA-dependent RNA polymerase catalyzes the transcription of DNA into RNA using the four ribonucleoside triphosphates as substrates. The sequence is that of DNA-directed RNA polymerase subunit alpha from Spirogyra maxima (Green alga).